The sequence spans 248 residues: Probable aquaporin TIP2-2 (248 aa).

Transmembrane regions (helical) follow at residues 21-41 and 55-75; these read AYVA…GSAI and AGLV…VAIG. The short motif at 84-86 is the NPA 1 element; that stretch reads NPA. The next 3 helical transmembrane spans lie at 87–109, 133–153, and 168–188; these read VTFG…WIAQ, LSGV…FGLV, and LGTI…LVAG. The NPA 2 signature appears at 196 to 198; that stretch reads NPA. A helical membrane pass occupies residues 210 to 230; the sequence is YTNIWIYWVGPLVGGGLAGLV.

Belongs to the MIP/aquaporin (TC 1.A.8) family. TIP (TC 1.A.8.10) subfamily. Expressed in roots and leaves.

The protein resides in the vacuole membrane. Aquaporins facilitate the transport of water and small neutral solutes across cell membranes. May be involved in transport from the vacuolar compartment to the cytoplasm. The protein is Probable aquaporin TIP2-2 (TIP2-2) of Oryza sativa subsp. japonica (Rice).